The following is a 456-amino-acid chain: Acyl-CoA transferase FPSE_08120 (456 aa).

A mitochondrion-targeting transit peptide spans 1 to 33; that stretch reads MARLLFSGQRLRPSFLRSYIRANPSSTPSATRA.

Belongs to the CoA-transferase III family.

Its subcellular location is the mitochondrion. Functionally, acyl-CoA transferase; part of the Fusarium detoxification of benzoxazolinone cluster involved in the degradation of benzoxazolinones produced by the host plant. Maize, wheat, and rye produce the 2 benzoxazinone phytoanticipins 2,4-dihy-droxy-7-methoxy-1,4-benzoxazin-3-one (DIMBOA) and 2,4-dihydroxy-1,4-benzoxazin-3-one (DIBOA) that, due to their inherent instability once released, spontaneously degrade to the more stable corresponding benzoxazolinones, 6-methoxy-2-benzoxazolinone (MBOA) and 2-benzoxazolinone (BOA), respectively. The first step in the detoxification of benzoxazolinones involves the hydrolysis of the cyclic ester bond of benzoxazolinones by the gamma-lactamase FDB1 to aminophenols. FDB1 is able to convert 2-benzoxazolinone (BOA) into 2-aminophenol (2-AP), as well as 6-methoxy-2-benzoxazolinone (MBOA) into 5-methoxy-2-aminophenol (2-AMP). The N-malonyltransferase FDB2 then metabolizes aminophenols via N-malonylation to non-toxic malonamic acids. FDB2 converts 2-AP into N-(2-hydroxyphenyl) malonamic acid (HPMA) and 2-AMP into N-(2-hydroxy-4-methoxyphenyl) malonamic acid (HMPMA). The cluster also contains 2 transcription factors (FDB3 and FPSE_08121), an aldo-keto reductase (FPSE_08125) that possibly associates with a ketone component of BOA and MBOA degradation, an esterase (FPSE_08126), an acyl-CoA transferase (FPSE_08120), a solute carrier protein (FPSE_08119) and a transmembrane transporter (FPSE_08127) proposed to shuttle metabolites of benzoxazolinone degradation. The sequence is that of Acyl-CoA transferase FPSE_08120 from Fusarium pseudograminearum (strain CS3096) (Wheat and barley crown-rot fungus).